We begin with the raw amino-acid sequence, 129 residues long: Follitropin subunit beta (129 aa).

Positions 1 to 20 (MKTVQFCFLFCCWKAICCNS) are cleaved as a signal peptide. 6 cysteine pairs are disulfide-bonded: Cys21-Cys69, Cys35-Cys84, Cys38-Cys122, Cys46-Cys100, Cys50-Cys102, and Cys105-Cys112. Residues Asn25 and Asn42 are each glycosylated (N-linked (GlcNAc...) asparagine).

It belongs to the glycoprotein hormones subunit beta family. In terms of assembly, heterodimer. The active follitropin is a heterodimer composed of an alpha chain/CGA shared with other hormones and a unique beta chain/FSHB shown here.

It localises to the secreted. Functionally, together with the alpha chain CGA constitutes follitropin, the follicle-stimulating hormone, and provides its biological specificity to the hormone heterodimer. Binds FSHR, a G protein-coupled receptor, on target cells to activate downstream signaling pathways. Follitropin is involved in follicle development and spermatogenesis in reproductive organs. This Saimiri boliviensis boliviensis (Bolivian squirrel monkey) protein is Follitropin subunit beta (FSHB).